Consider the following 311-residue polypeptide: Ribose-5-phosphate isomerase (311 aa).

Gly residues predominate over residues 22-32 (AGGAASGGGGN). The disordered stretch occupies residues 22-67 (AGGAASGGGGNSWDLPGSHVRLPGRAQSGTRGGAGNTSTSCGDSNS). Position 52 is an omega-N-methylarginine (Arg52). Over residues 57–67 (NTSTSCGDSNS) the composition is skewed to polar residues. The residue at position 106 (Ser106) is a Phosphoserine.

This sequence belongs to the ribose 5-phosphate isomerase family.

It catalyses the reaction aldehydo-D-ribose 5-phosphate = D-ribulose 5-phosphate. Its pathway is carbohydrate degradation; pentose phosphate pathway; D-ribose 5-phosphate from D-ribulose 5-phosphate (non-oxidative stage): step 1/1. In terms of biological role, catalyzes the reversible conversion of ribose-5-phosphate to ribulose 5-phosphate and participates in the first step of the non-oxidative branch of the pentose phosphate pathway. This chain is Ribose-5-phosphate isomerase, found in Homo sapiens (Human).